The primary structure comprises 65 residues: Conotoxin Cal1.5 (65 aa).

An N-terminal signal peptide occupies residues 1–18 (MRCLPVFIILLLLASTAA). Positions 19-49 (VDVAGSKLKRRLERKPYQGSQAYVKKTAFGL) are excised as a propeptide. Intrachain disulfides connect Cys-52–Cys-62 and Cys-53–Cys-59. Pro-61 carries the 4-hydroxyproline modification.

This sequence belongs to the conotoxin T superfamily. In terms of tissue distribution, expressed by the venom duct.

Its subcellular location is the secreted. Functionally, probable neurotoxin with unknown target. Possibly targets ion channels. In Californiconus californicus (California cone), this protein is Conotoxin Cal1.5.